Reading from the N-terminus, the 445-residue chain is Trigger factor (445 aa).

The PPIase FKBP-type domain occupies 164-249 (GDQVTFDFEG…VKKVEEAKLP (86 aa)).

The protein belongs to the FKBP-type PPIase family. Tig subfamily.

The protein localises to the cytoplasm. The catalysed reaction is [protein]-peptidylproline (omega=180) = [protein]-peptidylproline (omega=0). In terms of biological role, involved in protein export. Acts as a chaperone by maintaining the newly synthesized protein in an open conformation. Functions as a peptidyl-prolyl cis-trans isomerase. This is Trigger factor from Psychrobacter sp. (strain PRwf-1).